A 294-amino-acid polypeptide reads, in one-letter code: Ribosomal protein L11 methyltransferase (294 aa).

Residues threonine 146, glycine 167, aspartate 189, and asparagine 231 each coordinate S-adenosyl-L-methionine.

The protein belongs to the methyltransferase superfamily. PrmA family.

Its subcellular location is the cytoplasm. It carries out the reaction L-lysyl-[protein] + 3 S-adenosyl-L-methionine = N(6),N(6),N(6)-trimethyl-L-lysyl-[protein] + 3 S-adenosyl-L-homocysteine + 3 H(+). In terms of biological role, methylates ribosomal protein L11. This is Ribosomal protein L11 methyltransferase from Aliivibrio fischeri (strain ATCC 700601 / ES114) (Vibrio fischeri).